A 424-amino-acid chain; its full sequence is 3-phosphoshikimate 1-carboxyvinyltransferase (424 aa).

3-phosphoshikimate-binding residues include Lys-21, Ser-22, and Arg-26. Lys-21 provides a ligand contact to phosphoenolpyruvate. Residues Gly-91 and Arg-119 each contribute to the phosphoenolpyruvate site. Residues Ser-164, Gln-166, Asp-310, and Lys-337 each coordinate 3-phosphoshikimate. Gln-166 serves as a coordination point for phosphoenolpyruvate. Catalysis depends on Asp-310, which acts as the Proton acceptor. Residues Arg-341 and Arg-382 each contribute to the phosphoenolpyruvate site.

The protein belongs to the EPSP synthase family. As to quaternary structure, monomer.

It is found in the cytoplasm. The catalysed reaction is 3-phosphoshikimate + phosphoenolpyruvate = 5-O-(1-carboxyvinyl)-3-phosphoshikimate + phosphate. Its pathway is metabolic intermediate biosynthesis; chorismate biosynthesis; chorismate from D-erythrose 4-phosphate and phosphoenolpyruvate: step 6/7. In terms of biological role, catalyzes the transfer of the enolpyruvyl moiety of phosphoenolpyruvate (PEP) to the 5-hydroxyl of shikimate-3-phosphate (S3P) to produce enolpyruvyl shikimate-3-phosphate and inorganic phosphate. The protein is 3-phosphoshikimate 1-carboxyvinyltransferase of Campylobacter curvus (strain 525.92).